Consider the following 343-residue polypeptide: Biotin synthase (343 aa).

Residues 64-291 (NTVQLSTLLS…RAMVRLSAGR (228 aa)) enclose the Radical SAM core domain. 3 residues coordinate [4Fe-4S] cluster: C79, C83, and C86. The [2Fe-2S] cluster site is built by C123, C154, C214, and R286.

This sequence belongs to the radical SAM superfamily. Biotin synthase family. In terms of assembly, homodimer. The cofactor is [4Fe-4S] cluster. [2Fe-2S] cluster is required as a cofactor.

It carries out the reaction (4R,5S)-dethiobiotin + (sulfur carrier)-SH + 2 reduced [2Fe-2S]-[ferredoxin] + 2 S-adenosyl-L-methionine = (sulfur carrier)-H + biotin + 2 5'-deoxyadenosine + 2 L-methionine + 2 oxidized [2Fe-2S]-[ferredoxin]. It participates in cofactor biosynthesis; biotin biosynthesis; biotin from 7,8-diaminononanoate: step 2/2. Catalyzes the conversion of dethiobiotin (DTB) to biotin by the insertion of a sulfur atom into dethiobiotin via a radical-based mechanism. This chain is Biotin synthase, found in Cupriavidus necator (strain ATCC 17699 / DSM 428 / KCTC 22496 / NCIMB 10442 / H16 / Stanier 337) (Ralstonia eutropha).